Consider the following 470-residue polypeptide: GTPase Der (470 aa).

EngA-type G domains lie at 32-195 (PVVA…PTIS) and 206-379 (RRVA…KSWD). GTP contacts are provided by residues 38-45 (GRPNVGKS), 85-89 (DTGGW), 147-150 (NKVD), 212-219 (GKPNVGKS), 259-263 (DTAGL), and 324-327 (NKWD). Residues 380 to 462 (TRVSTGRLNT…PIRINVRVRE (83 aa)) enclose the KH-like domain.

Belongs to the TRAFAC class TrmE-Era-EngA-EngB-Septin-like GTPase superfamily. EngA (Der) GTPase family. Associates with the 50S ribosomal subunit.

GTPase that plays an essential role in the late steps of ribosome biogenesis. The protein is GTPase Der of Mycolicibacterium vanbaalenii (strain DSM 7251 / JCM 13017 / BCRC 16820 / KCTC 9966 / NRRL B-24157 / PYR-1) (Mycobacterium vanbaalenii).